Reading from the N-terminus, the 478-residue chain is 3-ketoacyl-CoA synthase 3 (478 aa).

An N-terminal signal peptide occupies residues 1–25; that stretch reads MDLLVMLLSLLVSYLIFKIWKRIDS. Positions 26–313 constitute an FAE domain; the sequence is KRDQNCYILD…FMLCLLLKKL (288 aa). Active-site residues include C168, H247, H345, H349, H378, and N382.

The protein belongs to the thiolase-like superfamily. Chalcone/stilbene synthases family. In terms of tissue distribution, expressed in siliques, leaves, stems and seedlings.

The protein localises to the endoplasmic reticulum. The catalysed reaction is a very-long-chain acyl-CoA + malonyl-CoA + H(+) = a very-long-chain 3-oxoacyl-CoA + CO2 + CoA. It participates in lipid metabolism; fatty acid biosynthesis. The sequence is that of 3-ketoacyl-CoA synthase 3 from Arabidopsis thaliana (Mouse-ear cress).